We begin with the raw amino-acid sequence, 220 residues long: Flavin-dependent thymidylate synthase (220 aa).

The region spanning 1–208 (MKIDILDKGF…PWTFEAFLKY (208 aa)) is the ThyX domain. Residues Thr-55, 78-81 (RHRI), and Glu-86 contribute to the FAD site. DUMP contacts are provided by residues 75–78 (QWFR), 86–90 (ELSGR), and Arg-147. The ThyX motif signature appears at 78–88 (RHRIASYNELS). FAD is bound by residues 163–165 (NAR) and Asn-169. Arg-174 lines the dUMP pocket. The active-site Involved in ionization of N3 of dUMP, leading to its activation is Arg-174.

It belongs to the thymidylate synthase ThyX family. Homotetramer. The cofactor is FAD.

It carries out the reaction dUMP + (6R)-5,10-methylene-5,6,7,8-tetrahydrofolate + NADPH + H(+) = dTMP + (6S)-5,6,7,8-tetrahydrofolate + NADP(+). The enzyme catalyses dUMP + formaldehyde + NADPH + H(+) = dTMP + NADP(+) + H2O. The protein operates within pyrimidine metabolism; dTTP biosynthesis. Functionally, catalyzes the reductive methylation of 2'-deoxyuridine-5'-monophosphate (dUMP or deoxyuridylate) to 2'-deoxythymidine-5'-monophosphate (dTMP or deoxythymidylate) while utilizing 5,10-methylenetetrahydrofolate (mTHF) as the methylene donor, and NAD(P)H and FADH(2) as the reductant. This reaction is a critical step in DNA biosynthesis. Can also use formaldehyde instead of mTHF as a direct methylene donor for dTMP synthesis. However, the tighter binding of ThyX to mTHF (KD of 4 uM) compared to formaldehyde (KD of 20 mM) confirms that methylene tetrahydrofolate acts as the biological carbon donor for ThyX, serving as a formaldehyde carrier/transporter and thus avoiding genotoxic effects. This chain is Flavin-dependent thymidylate synthase, found in Thermotoga maritima (strain ATCC 43589 / DSM 3109 / JCM 10099 / NBRC 100826 / MSB8).